Reading from the N-terminus, the 222-residue chain is Glutathione S-transferase 3 (222 aa).

Residues 2–83 (APLKLYGMPL…YIASKYASEG (82 aa)) enclose the GST N-terminal domain. Residues Ser12, 13-14 (PN), 41-42 (HK), 54-55 (QI), and 67-68 (ES) each bind glutathione. Positions 89 to 219 (ATASAAKLEV…AAIPLPPPPS (131 aa)) constitute a GST C-terminal domain.

It belongs to the GST superfamily. Phi family. As to quaternary structure, homodimer.

It carries out the reaction RX + glutathione = an S-substituted glutathione + a halide anion + H(+). Its function is as follows. Conjugation of reduced glutathione to a wide number of exogenous and endogenous hydrophobic electrophiles. Involved in the detoxification of certain herbicides. This is Glutathione S-transferase 3 from Zea mays (Maize).